We begin with the raw amino-acid sequence, 398 residues long: Argininosuccinate synthase (398 aa).

9-17 lines the ATP pocket; that stretch reads AYSGGLDTS. Positions 87 and 92 each coordinate L-citrulline. Gly117 is an ATP binding site. Residues Thr119, Asn123, and Asp124 each coordinate L-aspartate. L-citrulline is bound at residue Asn123. L-citrulline contacts are provided by Arg127, Ser176, Ser185, Glu261, and Tyr273.

The protein belongs to the argininosuccinate synthase family. Type 1 subfamily. Homotetramer.

The protein resides in the cytoplasm. It catalyses the reaction L-citrulline + L-aspartate + ATP = 2-(N(omega)-L-arginino)succinate + AMP + diphosphate + H(+). Its pathway is amino-acid biosynthesis; L-arginine biosynthesis; L-arginine from L-ornithine and carbamoyl phosphate: step 2/3. The chain is Argininosuccinate synthase from Clostridium tetani (strain Massachusetts / E88).